The primary structure comprises 238 residues: CD63 antigen (238 aa).

Over 1–11 (MAVEGGMKCVK) the chain is Cytoplasmic. The helical transmembrane segment at 12–32 (FLLYVLLLAFCACAVGLIAIG) threads the bilayer. Topologically, residues 33–51 (VAVQVVLKQAITHETTAGS) are extracellular. The helical transmembrane segment at 52-72 (LLPVVIIAVGAFLFLVAFVGC) threads the bilayer. Residues 73–81 (CGACKENYC) lie on the Cytoplasmic side of the membrane. A helical transmembrane segment spans residues 82-102 (LMITFAIFLSLIMLVEVAVAI). Over 103–203 (AGYVFRDQVK…TIAIWLRKNI (101 aa)) the chain is Extracellular. N-linked (GlcNAc...) asparagine glycosylation is found at Asn116, Asn130, Asn150, and Asn172. A helical transmembrane segment spans residues 204-224 (LLVAAAALGIAFVEVLGIIFS). At 225–238 (CCLVKSIRSGYEVM) the chain is on the cytoplasmic side. The short motif at 234-238 (GYEVM) is the Lysosomal targeting motif element.

The protein belongs to the tetraspanin (TM4SF) family. Interacts with TIMP1 and ITGB1 and recruits TIMP1 to ITGB1. Interacts with CD9. Identified in a complex with CD9 and ITGB3. Interacts with PMEL. Interacts with KDR/VEGFR2; identified in a complex with ITGB1 and KDR/VEGFR2 and is required to recruit KDR to ITGB1 complexes. Interacts with SYT7. Palmitoylated at a low, basal level in unstimulated platelets. The level of palmitoylation increases when platelets are activated by thrombin (in vitro). Ubiquitous. Strongly expressed in kidney. Detected in spleen, bone marrow, peripheral blood mononuclear cells and macrophages.

Its subcellular location is the cell membrane. It localises to the lysosome membrane. The protein resides in the late endosome membrane. The protein localises to the endosome. It is found in the multivesicular body. Its subcellular location is the melanosome. It localises to the secreted. The protein resides in the extracellular exosome. The protein localises to the cell surface. Functions as a cell surface receptor for TIMP1 and plays a role in the activation of cellular signaling cascades. Plays a role in the activation of ITGB1 and integrin signaling, leading to the activation of AKT, FAK/PTK2 and MAP kinases. Promotes cell survival, reorganization of the actin cytoskeleton, cell adhesion, spreading and migration, via its role in the activation of AKT and FAK/PTK2. Plays a role in VEGFA signaling via its role in regulating the internalization of KDR/VEGFR2. Plays a role in intracellular vesicular transport processes, and is required for normal trafficking of the PMEL luminal domain that is essential for the development and maturation of melanocytes. Plays a role in the adhesion of leukocytes onto endothelial cells via its role in the regulation of SELP trafficking. May play a role in mast cell degranulation in response to Ms4a2/FceRI stimulation, but not in mast cell degranulation in response to other stimuli. This is CD63 antigen (Cd63) from Mus musculus (Mouse).